We begin with the raw amino-acid sequence, 416 residues long: Ribulose bisphosphate carboxylase large chain (416 aa).

2 residues coordinate substrate: N100 and T150. The active-site Proton acceptor is K152. K154 is a substrate binding site. Positions 178, 180, and 181 each coordinate Mg(2+). Position 178 is an N6-carboxylysine (K178). H271 serves as the catalytic Proton acceptor. Substrate is bound by residues R272, H304, and S356.

Belongs to the RuBisCO large chain family. Type I subfamily. In terms of assembly, heterohexadecamer of 8 large chains and 8 small chains; disulfide-linked. The disulfide link is formed within the large subunit homodimers. Requires Mg(2+) as cofactor. Post-translationally, the disulfide bond which can form in the large chain dimeric partners within the hexadecamer appears to be associated with oxidative stress and protein turnover.

The protein localises to the plastid. It is found in the chloroplast. It catalyses the reaction 2 (2R)-3-phosphoglycerate + 2 H(+) = D-ribulose 1,5-bisphosphate + CO2 + H2O. The enzyme catalyses D-ribulose 1,5-bisphosphate + O2 = 2-phosphoglycolate + (2R)-3-phosphoglycerate + 2 H(+). RuBisCO catalyzes two reactions: the carboxylation of D-ribulose 1,5-bisphosphate, the primary event in carbon dioxide fixation, as well as the oxidative fragmentation of the pentose substrate in the photorespiration process. Both reactions occur simultaneously and in competition at the same active site. The sequence is that of Ribulose bisphosphate carboxylase large chain (rbcL) from Cheiropleuria bicuspis (Fern).